Consider the following 270-residue polypeptide: Phospholysine phosphohistidine inorganic pyrophosphate phosphatase (270 aa).

Mg(2+) contacts are provided by Asp17 and Ser19. Substrate-binding positions include 17–19 (DIS), 54–55 (TN), and Lys189. Asp214 contacts Mg(2+).

Belongs to the HAD-like hydrolase superfamily. As to quaternary structure, homodimer. Requires Mg(2+) as cofactor. In terms of tissue distribution, detected in liver (at protein level).

It is found in the cytoplasm. Its subcellular location is the nucleus. The catalysed reaction is diphosphate + H2O = 2 phosphate + H(+). In terms of biological role, phosphatase that hydrolyzes imidodiphosphate, 3-phosphohistidine and 6-phospholysine. Has broad substrate specificity and can also hydrolyze inorganic diphosphate, but with lower efficiency. The protein is Phospholysine phosphohistidine inorganic pyrophosphate phosphatase (LHPP) of Bos taurus (Bovine).